Reading from the N-terminus, the 91-residue chain is UPF0358 protein SAS1047 (91 aa).

This sequence belongs to the UPF0358 family.

The sequence is that of UPF0358 protein SAS1047 from Staphylococcus aureus (strain MSSA476).